A 339-amino-acid polypeptide reads, in one-letter code: Transmembrane protein 120B (339 aa).

Positions 1–67 form a coiled coil; that stretch reads MSGQLERCER…KHTLQRYKRH (67 aa). Helical transmembrane passes span 102–124, 132–152, 159–179, 187–207, 270–290, and 302–322; these read GLYL…AKFA, FKLY…FVLH, VFNF…SILI, GWWV…LTWP, FLLP…VTLF, and QVFV…LTTL.

The protein belongs to the TMEM120 family. Heterooligomer with TMEM120A. In terms of tissue distribution, expressed in inguinal and subcutaneous white adipose tissue and in brown adipose tissue.

The protein resides in the nucleus inner membrane. Functionally, necessary for efficient adipogenesis. Does not show ion channel activity. This Mus musculus (Mouse) protein is Transmembrane protein 120B.